We begin with the raw amino-acid sequence, 349 residues long: Flap endonuclease 1 (349 aa).

An N-domain region spans residues 1 to 98; the sequence is MDLADLVKDV…EELERRRKAK (98 aa). Mg(2+) is bound by residues Asp-27, Asp-80, Glu-152, Glu-154, Asp-173, Asp-175, and Asp-236. An I-domain region spans residues 116 to 258; sequence ELRKYSQAIL…RALKIIKKYG (143 aa). The interval 341 to 349 is interaction with PCNA; the sequence is RQTGLDRWF.

Belongs to the XPG/RAD2 endonuclease family. FEN1 subfamily. Interacts with PCNA via subunit PCNA1. Mg(2+) serves as cofactor.

With respect to regulation, heterotrimeric PCNA stimulates the nuclease activity without altering cleavage specificity. Structure-specific nuclease with 5'-flap endonuclease and 5'-3' exonuclease activities involved in DNA replication and repair. During DNA replication, cleaves the 5'-overhanging flap structure that is generated by displacement synthesis when DNA polymerase encounters the 5'-end of a downstream Okazaki fragment. Binds the unpaired 3'-DNA end and kinks the DNA to facilitate 5' cleavage specificity. Cleaves one nucleotide into the double-stranded DNA from the junction in flap DNA, leaving a nick for ligation. Also involved in the base excision repair (BER) pathway. Acts as a genome stabilization factor that prevents flaps from equilibrating into structures that lead to duplications and deletions. Also possesses 5'-3' exonuclease activity on nicked or gapped double-stranded DNA. DNA polymerase I, DNA ligase and the flap endonuclease may be constitutively associated with the PCNA heterotrimer forming a scanning complex able to couple DNA synthesis and Okazaki fragment maturation. The chain is Flap endonuclease 1 from Saccharolobus solfataricus (strain ATCC 35092 / DSM 1617 / JCM 11322 / P2) (Sulfolobus solfataricus).